The chain runs to 91 residues: Small ribosomal subunit protein uS19 (91 aa).

Belongs to the universal ribosomal protein uS19 family.

Functionally, protein S19 forms a complex with S13 that binds strongly to the 16S ribosomal RNA. In Halorhodospira halophila (strain DSM 244 / SL1) (Ectothiorhodospira halophila (strain DSM 244 / SL1)), this protein is Small ribosomal subunit protein uS19.